A 415-amino-acid chain; its full sequence is Serine hydroxymethyltransferase 1 (415 aa).

(6S)-5,6,7,8-tetrahydrofolate contacts are provided by residues Leu-122 and 126–128 (GHL). Lys-230 is subject to N6-(pyridoxal phosphate)lysine.

Belongs to the SHMT family. Homodimer. Requires pyridoxal 5'-phosphate as cofactor.

It is found in the cytoplasm. The catalysed reaction is (6R)-5,10-methylene-5,6,7,8-tetrahydrofolate + glycine + H2O = (6S)-5,6,7,8-tetrahydrofolate + L-serine. It functions in the pathway one-carbon metabolism; tetrahydrofolate interconversion. It participates in amino-acid biosynthesis; glycine biosynthesis; glycine from L-serine: step 1/1. Functionally, catalyzes the reversible interconversion of serine and glycine with tetrahydrofolate (THF) serving as the one-carbon carrier. This reaction serves as the major source of one-carbon groups required for the biosynthesis of purines, thymidylate, methionine, and other important biomolecules. Also exhibits THF-independent aldolase activity toward beta-hydroxyamino acids, producing glycine and aldehydes, via a retro-aldol mechanism. This Burkholderia mallei (strain ATCC 23344) protein is Serine hydroxymethyltransferase 1.